A 63-amino-acid polypeptide reads, in one-letter code: Putative antitoxin AF_1084 (63 aa).

The protein belongs to the UPF0165 family.

Functionally, possibly the antitoxin component of a type II toxin-antitoxin (TA) system. The chain is Putative antitoxin AF_1084 from Archaeoglobus fulgidus (strain ATCC 49558 / DSM 4304 / JCM 9628 / NBRC 100126 / VC-16).